Reading from the N-terminus, the 97-residue chain is Large ribosomal subunit protein bL25 (97 aa).

The protein belongs to the bacterial ribosomal protein bL25 family. Part of the 50S ribosomal subunit; part of the 5S rRNA/L5/L18/L25 subcomplex. Contacts the 5S rRNA. Binds to the 5S rRNA independently of L5 and L18.

Its function is as follows. This is one of the proteins that binds to the 5S RNA in the ribosome where it forms part of the central protuberance. This Buchnera aphidicola subsp. Baizongia pistaciae (strain Bp) protein is Large ribosomal subunit protein bL25.